A 364-amino-acid chain; its full sequence is Histidinol-phosphate aminotransferase (364 aa).

Lys-220 bears the N6-(pyridoxal phosphate)lysine mark.

Belongs to the class-II pyridoxal-phosphate-dependent aminotransferase family. Histidinol-phosphate aminotransferase subfamily. Homodimer. Pyridoxal 5'-phosphate serves as cofactor.

The catalysed reaction is L-histidinol phosphate + 2-oxoglutarate = 3-(imidazol-4-yl)-2-oxopropyl phosphate + L-glutamate. Its pathway is amino-acid biosynthesis; L-histidine biosynthesis; L-histidine from 5-phospho-alpha-D-ribose 1-diphosphate: step 7/9. This chain is Histidinol-phosphate aminotransferase, found in Stenotrophomonas maltophilia (strain R551-3).